Reading from the N-terminus, the 21-residue chain is Agglutinin beta-2 chain (21 aa).

The span at 1–10 shows a compositional bias: polar residues; the sequence is NEQSGKSQTV. The segment at 1-21 is disordered; the sequence is NEQSGKSQTVIVGPWGAQVST.

It belongs to the jacalin lectin family. As to quaternary structure, tetramer of four alpha chains associated with two or four beta chains.

Functionally, D-galactose-specific lectin, binds the T-antigen structure Gal-beta1,3-GalNAc (Thomsen-Friedenreich-antigen-specific lectin). Potent and selective stimulant of distinct T- and B-cell functions. Shows a unique ability to specifically recognize IgA-1 from human serum. The protein is Agglutinin beta-2 chain of Artocarpus integer (Jack fruit).